Here is a 204-residue protein sequence, read N- to C-terminus: Dephospho-CoA kinase (204 aa).

The DPCK domain maps to 4–201; it reads VIGLTGGIAS…EKYLAMCKKN (198 aa). An ATP-binding site is contributed by 12-17; the sequence is ASGKTT.

Belongs to the CoaE family.

It is found in the cytoplasm. The enzyme catalyses 3'-dephospho-CoA + ATP = ADP + CoA + H(+). The protein operates within cofactor biosynthesis; coenzyme A biosynthesis; CoA from (R)-pantothenate: step 5/5. In terms of biological role, catalyzes the phosphorylation of the 3'-hydroxyl group of dephosphocoenzyme A to form coenzyme A. The sequence is that of Dephospho-CoA kinase from Vibrio parahaemolyticus serotype O3:K6 (strain RIMD 2210633).